Reading from the N-terminus, the 315-residue chain is Glutamine synthetase nodule isozyme (315 aa).

The region spanning 19-99 (IIAEYIWVGG…VICDTYTPSG (81 aa)) is the GS beta-grasp domain. One can recognise a GS catalytic domain in the interval 106 to 315 (KRHAAAKIFS…WGVANRGASI (210 aa)).

This sequence belongs to the glutamine synthetase family. As to quaternary structure, homooctamer.

The protein resides in the cytoplasm. The catalysed reaction is L-glutamate + NH4(+) + ATP = L-glutamine + ADP + phosphate + H(+). The chain is Glutamine synthetase nodule isozyme from Lupinus angustifolius (Narrow-leaved blue lupine).